The chain runs to 250 residues: Agamous-like MADS-box protein AGL8 homolog (250 aa).

An MADS-box domain is found at 3–57; that stretch reads RGRVQLKRIENKINRQVTFSKRRSGLLKKAHEISVLCDAEVGLIVFSTKGKLFEY. The K-box domain occupies 88 to 178; it reads PGSWTLEHAK…SKKVKEREKE (91 aa).

As to expression, abundant in vegetative organs.

It localises to the nucleus. Probable transcription factor. The polypeptide is Agamous-like MADS-box protein AGL8 homolog (Solanum tuberosum (Potato)).